The primary structure comprises 352 residues: MAPLGYLLVLCSLKQALGSYPIWWSLAVGPQYSSLSTQPILCASIPGLVPKQLRFCRNYVEIMPSVAEGVKAGIQECQHQFRGRRWNCTTVSNSLAIFGPVLDKATRESAFVHAIASAGVAFAVTRSCAEGSAAICGCSSRLQGSPGEGWKWGGCSEDIEFGGMVSREFADARENRPDARSAMNRHNNEAGRQAIASHMHLKCKCHGLSGSCEVKTCWWSQPDFRTIGDFLKDKYDSASEMVVEKHRESRGWVETLRPRYTYFKVPTERDLVYYEASPNFCEPNPETGSFGTRDRTCNVSSHGIDGCDLLCCGRGHNARTERRREKCHCVFHWCCYVSCQECTRVYDVHTCK.

An N-terminal signal peptide occupies residues 1-18 (MAPLGYLLVLCSLKQALG). Cystine bridges form between cysteine 77–cysteine 88, cysteine 128–cysteine 136, cysteine 138–cysteine 155, cysteine 203–cysteine 217, cysteine 205–cysteine 212, cysteine 281–cysteine 312, cysteine 297–cysteine 307, cysteine 311–cysteine 351, cysteine 327–cysteine 342, cysteine 329–cysteine 339, and cysteine 334–cysteine 335. The N-linked (GlcNAc...) asparagine glycan is linked to asparagine 87. Serine 209 carries the O-palmitoleoyl serine; by PORCN lipid modification. Residue asparagine 298 is glycosylated (N-linked (GlcNAc...) asparagine).

This sequence belongs to the Wnt family. Forms a soluble 1:1 complex with AFM; this prevents oligomerization and is required for prolonged biological activity. The complex with AFM may represent the physiological form in body fluids. Homooligomer; disulfide-linked, leading to inactivation. Interacts with APCDD1 and WLS. Component of the Wnt-Fzd-LRP5-LRP6 signaling complex that contains a WNT protein, a FZD protein and LRP5 or LRP6. Interacts directly in the complex with LRP6. Interacts with PORCN. Interacts with glypican GPC3. Interacts with PKD1 (via extracellular domain). Interacts with FZD5. Proteolytic processing by TIKI1 and TIKI2 promotes oxidation and formation of large disulfide-bond oligomers, leading to inactivation of WNT3A. In terms of processing, disulfide bonds have critical and distinct roles in secretion and activity. Loss of each conserved cysteine in WNT3A results in high molecular weight oxidized Wnt oligomers, which are formed through inter-Wnt disulfide bonding. Post-translationally, palmitoleoylation by PORCN is required for efficient binding to frizzled receptors. Palmitoleoylation is required for proper trafficking to cell surface, vacuolar acidification is critical to release palmitoleoylated WNT3A from WLS in secretory vesicles. Depalmitoleoylated by NOTUM, leading to inhibit Wnt signaling pathway, possibly by promoting disulfide bond formation and oligomerization. Dorsal portion of the neural tube (developing roof plate), and mesenchyme tissue surrounding the umbilical veins.

The protein localises to the secreted. It localises to the extracellular space. Its subcellular location is the extracellular matrix. In terms of biological role, ligand for members of the frizzled family of seven transmembrane receptors. Functions in the canonical Wnt signaling pathway that results in activation of transcription factors of the TCF/LEF family. Required for normal embryonic mesoderm development and formation of caudal somites. Required for normal morphogenesis of the developing neural tube. Mediates self-renewal of the stem cells at the bottom on intestinal crypts (in vitro). The chain is Protein Wnt-3a (Wnt3a) from Mus musculus (Mouse).